The sequence spans 102 residues: NADH-quinone oxidoreductase subunit K (102 aa).

The next 3 helical transmembrane spans lie at 5–25, 31–51, and 62–82; these read LAHY…GIFL, IILL…FVAF, and VFVF…LAIL.

The protein belongs to the complex I subunit 4L family. As to quaternary structure, NDH-1 is composed of 14 different subunits. Subunits NuoA, H, J, K, L, M, N constitute the membrane sector of the complex.

It is found in the cell inner membrane. It catalyses the reaction a quinone + NADH + 5 H(+)(in) = a quinol + NAD(+) + 4 H(+)(out). In terms of biological role, NDH-1 shuttles electrons from NADH, via FMN and iron-sulfur (Fe-S) centers, to quinones in the respiratory chain. The immediate electron acceptor for the enzyme in this species is believed to be ubiquinone. Couples the redox reaction to proton translocation (for every two electrons transferred, four hydrogen ions are translocated across the cytoplasmic membrane), and thus conserves the redox energy in a proton gradient. The chain is NADH-quinone oxidoreductase subunit K from Bordetella parapertussis (strain 12822 / ATCC BAA-587 / NCTC 13253).